The sequence spans 336 residues: Zinc-type alcohol dehydrogenase-like protein SE_1777 (336 aa).

It belongs to the zinc-containing alcohol dehydrogenase family. Quinone oxidoreductase subfamily.

This Staphylococcus epidermidis (strain ATCC 12228 / FDA PCI 1200) protein is Zinc-type alcohol dehydrogenase-like protein SE_1777.